Consider the following 234-residue polypeptide: ATP synthase subunit a 1 (234 aa).

5 helical membrane passes run 20-40, 76-96, 105-125, 162-184, and 195-215; these read ETVVTTWLIMLVLVVASILLT, LLPLIGTFWIFLPVANLLGVI, DLSVTAALALVVFFAVHAYGV, LFGNIMSLEMAALLILLVAGFLA, and EALVQAYIFGMLALIYVAGAM.

Belongs to the ATPase A chain family. As to quaternary structure, F-type ATPases have 2 components, CF(1) - the catalytic core - and CF(0) - the membrane proton channel. CF(1) has five subunits: alpha(3), beta(3), gamma(1), delta(1), epsilon(1). CF(0) has three main subunits: a(1), b(2) and c(9-12). The alpha and beta chains form an alternating ring which encloses part of the gamma chain. CF(1) is attached to CF(0) by a central stalk formed by the gamma and epsilon chains, while a peripheral stalk is formed by the delta and b chains.

It is found in the cell inner membrane. Functionally, key component of the proton channel; it plays a direct role in the translocation of protons across the membrane. This is ATP synthase subunit a 1 from Hahella chejuensis (strain KCTC 2396).